The sequence spans 350 residues: Induced myeloid leukemia cell differentiation protein Mcl-1 homolog (350 aa).

Glycyl lysine isopeptide (Lys-Gly) (interchain with G-Cter in ubiquitin) cross-links involve residues K5 and K40. Positions 104–175 (CASPPEEMEG…PAEEEEDELF (72 aa)) are PEST-like. S121 carries the post-translational modification Phosphoserine. K136 participates in a covalent cross-link: Glycyl lysine isopeptide (Lys-Gly) (interchain with G-Cter in ubiquitin). Residues 148-170 (GEASSGPGTDGSLPSTPPPAEEE) form a disordered region. Phosphoserine; by GSK3-alpha and GSK3-beta is present on S159. S162 bears the Phosphoserine mark. A Phosphothreonine; by MAPK modification is found at T163. Residues K194 and K197 each participate in a glycyl lysine isopeptide (Lys-Gly) (interchain with G-Cter in ubiquitin) cross-link. Residues 209-223 (ALETLRRVGDGVQRN) carry the BH3 motif. Residues 252–272 (HVFSDGVTNWGRIVTLISFGA) carry the BH1 motif. The BH2 motif lies at 304–319 (DWLVKQRGWDGFVEFF). Residues 328 to 348 (IRNVLLAFAGVAGVGAGLAYL) traverse the membrane as a helical segment.

It belongs to the Bcl-2 family. As to quaternary structure, interacts with HIF3A (via C-terminus domain). Interacts with BOK, BIK, BAX, BAK1, and TPT1. Interacts with unphosphorylated BAD. Interacts with BMF, BBC3 and PMAIP1. Interacts with BOP. Interacts with BCL2L11; may sequester BCL2L11 to prevent its pro-apoptotic activity. Interacts with GIMAP5 and HSPA8/HSC70; the interaction between HSPA8 and MCL1 is impaired in the absence of GIMAP5. In terms of processing, cleaved by CASP3 during apoptosis, yielding a pro-apoptotic C-terminal fragment. Rapidly degraded in the absence of phosphorylation in the PEST region. Post-translationally, phosphorylated on Ser-159, by GSK3, in response to IL3/interleukin-3 withdrawal. Phosphorylation at Ser-159 induces ubiquitination and proteasomal degradation, abrogating the anti-apoptotic activity. Treatment with taxol or okadaic acid induces phosphorylation on additional sites. In terms of processing, ubiquitinated. Ubiquitination is induced by phosphorylation at Ser-159. Deubiquitinated by USP20; leading to increased stability.

The protein localises to the membrane. It localises to the cytoplasm. The protein resides in the mitochondrion. It is found in the nucleus. Its subcellular location is the nucleoplasm. In terms of biological role, involved in the regulation of apoptosis versus cell survival, and in the maintenance of viability but not of proliferation. Mediates its effects by interactions with a number of other regulators of apoptosis. The protein is Induced myeloid leukemia cell differentiation protein Mcl-1 homolog (MCL1) of Felis catus (Cat).